The following is a 229-amino-acid chain: ATPase SWSAP1 (229 aa).

The segment at 209-229 (PWPTQAGDPSSGKGSSSGGQP) is disordered.

Interacts with ZSWIM7; they form a functional complex involved in homologous recombination repair and stabilize each other. Interacts with RAD51, RAD51B, RAD51C, RAD51D and XRCC3; involved in homologous recombination repair.

It localises to the nucleus. In terms of biological role, ATPase which is preferentially stimulated by single-stranded DNA and is involved in homologous recombination repair (HRR). Has a DNA-binding activity which is independent of its ATPase activity. The polypeptide is ATPase SWSAP1 (SWSAP1) (Homo sapiens (Human)).